Reading from the N-terminus, the 128-residue chain is CD59 glycoprotein (128 aa).

Residues 1-25 (MGIQGGSVLFGLLLVLAVFCHSGNS) form the signal peptide. The region spanning 26-108 (LQCYSCPYPT…ALKNGGTTLS (83 aa)) is the UPAR/Ly6 domain. 5 disulfide bridges follow: Cys-28-Cys-51, Cys-31-Cys-38, Cys-44-Cys-64, Cys-70-Cys-88, and Cys-89-Cys-94. The N-linked (GlcNAc...) asparagine glycan is linked to Asn-43. Asn-102 carries the GPI-anchor amidated asparagine lipid modification. The propeptide at 103–128 (GGTTLSKKTVLLLVIPFLVAAWSLHP) is removed in mature form.

Interacts with T-cell surface antigen CD2. Post-translationally, N- and O-glycosylated.

It localises to the cell membrane. It is found in the secreted. Functionally, potent inhibitor of the complement membrane attack complex (MAC) action, which protects self-cells from damage during complement activation. Acts by binding to the beta-haipins of C8 (C8A and C8B) components of the assembling MAC, forming an intermolecular beta-sheet that prevents incorporation of the multiple copies of C9 required for complete formation of the osmolytic pore. The polypeptide is CD59 glycoprotein (Aotus trivirgatus (Three-striped night monkey)).